The sequence spans 435 residues: 3-phosphoshikimate 1-carboxyvinyltransferase (435 aa).

3 residues coordinate 3-phosphoshikimate: Lys25, Ser26, and Arg30. Lys25 contacts phosphoenolpyruvate. Residues Gly99 and Arg130 each coordinate phosphoenolpyruvate. 3-phosphoshikimate-binding residues include Ser176, Ser177, Gln178, Ser204, Asp319, Asn342, and Lys346. Gln178 contributes to the phosphoenolpyruvate binding site. The Proton acceptor role is filled by Asp319. Residues Arg350, Arg394, and Lys419 each contribute to the phosphoenolpyruvate site.

Belongs to the EPSP synthase family. As to quaternary structure, monomer.

It localises to the cytoplasm. It carries out the reaction 3-phosphoshikimate + phosphoenolpyruvate = 5-O-(1-carboxyvinyl)-3-phosphoshikimate + phosphate. It functions in the pathway metabolic intermediate biosynthesis; chorismate biosynthesis; chorismate from D-erythrose 4-phosphate and phosphoenolpyruvate: step 6/7. Functionally, catalyzes the transfer of the enolpyruvyl moiety of phosphoenolpyruvate (PEP) to the 5-hydroxyl of shikimate-3-phosphate (S3P) to produce enolpyruvyl shikimate-3-phosphate and inorganic phosphate. The protein is 3-phosphoshikimate 1-carboxyvinyltransferase of Haemophilus ducreyi (strain 35000HP / ATCC 700724).